The sequence spans 444 residues: 4-O-dimethylallyl-L-tyrosine synthase (444 aa).

The protein belongs to the tryptophan dimethylallyltransferase family. Homodimer.

The enzyme catalyses L-tyrosine + dimethylallyl diphosphate = 4-O-dimethylallyl-L-tyrosine + diphosphate. In terms of biological role, 4-O-dimethylallyl-L-tyrosine synthase; part of the gene cluster that mediates the biosynthesis of an unusual class of epipolythiodioxopiperazines (ETPs) lacking the reactive thiol group important for toxicity. Firstly, L-tyrosine is prenylated by tcpD, before undergoing condensation with L-glycine in a reaction catalyzed by the NRPS tcpP leading to the diketopiperazine (DKP) backbone. Afterwards the alpha-carbon of tyrosine is oxidized by the cytochrome P450 tcpC to form a hydroxyl group. However, in contrast other ETP biosynthesis pathways studied so far, tcpC is not able to bishydroxylate the DKP at both alpha-carbon positions, but hydroxylates the alpha-carbon of the tyrosine part and the nitrogen of the glycine part. The next steps involve an alpha,beta-elimination reaction catalyzed by tcpI, a methylation by the methyltransferase tcpN the action of the four enzyme cascade tcpG/K/J/I. Due to a dysfunctional cytochrome P450 monooxygenase tcpC, the pathway leads to the biosynthesis of probable non-toxic metabolites lacking the reactive thiol group. The polypeptide is 4-O-dimethylallyl-L-tyrosine synthase (Claviceps purpurea (strain 20.1) (Ergot fungus)).